A 278-amino-acid chain; its full sequence is MDVRQSIHSAHAKTLDTQGLRNEFLVEKVFVADEYTMVYSHIDRIIVGGIMPVTKTVSVGGEVGKQLGVSYFLERRELGVINIGGAGTITVGGQCYEIGHRDALYVGKGAKEVVFASIDTATPAKFYYNCAPAHTTYPTKKVTPDEVSPVTLGDNLTSNRRTINKYFVPDVLETCQLSMGLTELAPGNLWNTMPCHTHERRMEVYFYFNMDDDACVFHMMGQPQETRHIVMHNEQAVISPSWSIHSGVGTKAYTFIWGMVGENQVFDDMDHVAVKDLR.

Zn(2+) contacts are provided by His196, His198, Glu203, and His245.

It belongs to the KduI family. As to quaternary structure, homohexamer. Zn(2+) is required as a cofactor.

It carries out the reaction 5-dehydro-4-deoxy-D-glucuronate = 3-deoxy-D-glycero-2,5-hexodiulosonate. Its pathway is glycan metabolism; pectin degradation; 2-dehydro-3-deoxy-D-gluconate from pectin: step 4/5. Its function is as follows. Catalyzes the isomerization of 5-dehydro-4-deoxy-D-glucuronate to 3-deoxy-D-glycero-2,5-hexodiulosonate. The sequence is that of 4-deoxy-L-threo-5-hexosulose-uronate ketol-isomerase from Escherichia coli O127:H6 (strain E2348/69 / EPEC).